We begin with the raw amino-acid sequence, 134 residues long: Viral interleukin-8 homolog (134 aa).

Residues M1–G22 form the signal peptide.

It belongs to the intercrine alpha (chemokine CxC) family. Homodimer.

The protein localises to the secreted. Plays a role in the early phase of cytolytic infections presumably by recruiting host B or T-lymphocytes. The sequence is that of Viral interleukin-8 homolog (MDV078) from Gallus gallus (Chicken).